Here is a 708-residue protein sequence, read N- to C-terminus: ATP-dependent DNA helicase Hel308 (708 aa).

Residues Gln-28 and 46 to 53 (TATASGKS) contribute to the ATP site. Residues 33–198 (RAGIFDGRSV…WLGARLVESS (166 aa)) form the Helicase ATP-binding domain. A DEAH box motif is present at residues 143–146 (DEIH). Residues 231–429 (EVALAVDAVA…EPNLRAHVLG (199 aa)) form the Helicase C-terminal domain.

It belongs to the helicase family. Hel308 subfamily. In terms of assembly, monomer.

The catalysed reaction is Couples ATP hydrolysis with the unwinding of duplex DNA by translocating in the 3'-5' direction.. It carries out the reaction ATP + H2O = ADP + phosphate + H(+). Its function is as follows. DNA-dependent ATPase and 3'-5' DNA helicase that may be involved in repair of stalled replication forks. This Pyrobaculum calidifontis (strain DSM 21063 / JCM 11548 / VA1) protein is ATP-dependent DNA helicase Hel308.